The sequence spans 296 residues: uncharacterized protein (296 aa).

Helical transmembrane passes span 10–29 (FSTL…FSLL), 36–58 (YIVL…YYIL), 112–131 (FFAL…MFVT), 188–210 (ILIF…LYLR), 241–260 (MMYG…SAYF), and 273–295 (MYIS…VTYI).

It localises to the cell membrane. This is an uncharacterized protein from Clostridium acetobutylicum (strain ATCC 824 / DSM 792 / JCM 1419 / IAM 19013 / LMG 5710 / NBRC 13948 / NRRL B-527 / VKM B-1787 / 2291 / W).